The sequence spans 759 residues: Holliday junction resolvase YEN1 (759 aa).

Disordered stretches follow at residues 62 to 83 (RSRS…SQEY), 498 to 518 (SQSP…TRRQ), and 683 to 702 (KSRT…KSRS). Low complexity predominate over residues 500–512 (SPLKRSNSPSRSK). 2 positions are modified to phosphoserine: S730 and S731.

This sequence belongs to the XPG/RAD2 endonuclease family. GEN subfamily.

Its subcellular location is the cytoplasm. The protein localises to the nucleus. Endonuclease which resolves Holliday junctions by the introduction of symmetrically related cuts across the junction point, to produce nicked duplex products in which the nicks can be readily ligated. Four-way DNA intermediates, also known as Holliday junctions, are formed during homologous recombination and DNA repair, and their resolution is necessary for proper chromosome segregation. Involved in DNA-damage repair in vegetative cells. The protein is Holliday junction resolvase YEN1 (YEN1) of Saccharomyces cerevisiae (strain ATCC 204508 / S288c) (Baker's yeast).